The chain runs to 212 residues: Ras-related protein Rab-2A (212 aa).

Position 2 is an N-acetylalanine (Ala2). Residues 2–19 form a required for interaction with PRKCI region; the sequence is AYAYLFKYIIIGDTGVGK. Positions 16, 17, 18, 19, 20, 21, and 38 each coordinate GTP. Ser20 serves as a coordination point for Mg(2+). Residues 37–42 carry the Switch 1 motif; sequence LTIGVE. Residues Thr38 and Asp61 each coordinate Mg(2+). Residues 63–72 carry the Switch 2 motif; sequence AGQESFRSIT. Residues Gly64, Asn119, Lys120, Asp122, Ala150, and Lys151 each contribute to the GTP site. 2 S-geranylgeranyl cysteine lipidation sites follow: Cys211 and Cys212.

Belongs to the small GTPase superfamily. Rab family. As to quaternary structure, interacts with PRKCI. Interacts with TRIP11. Interacts (in GTP-bound form) with GARIN1B. Interacts (GTP-bound) with HOPS complex component VPS39; interaction contributes to obtaining a functional HOPS complex that promotes autophagosome-lysosome membrane fusion driven by STX17-SNAP29-VAMP8. May interact with VPS41. It depends on Mg(2+) as a cofactor. Prenylated. Prenylation is required for association with cellular membranes.

The protein resides in the endoplasmic reticulum-Golgi intermediate compartment membrane. Its subcellular location is the melanosome. The protein localises to the endoplasmic reticulum membrane. It is found in the golgi apparatus membrane. It localises to the cytoplasmic vesicle. The protein resides in the secretory vesicle. Its subcellular location is the acrosome. The protein localises to the autophagosome membrane. The enzyme catalyses GTP + H2O = GDP + phosphate + H(+). Regulated by guanine nucleotide exchange factors (GEFs) which promote the exchange of bound GDP for free GTP, GTPase activating proteins (GAPs) which increase the GTP hydrolysis activity, and GDP dissociation inhibitors (GDIs) which inhibit the dissociation of the nucleotide from the GTPase. Its function is as follows. The small GTPases Rab are key regulators of intracellular membrane trafficking, from the formation of transport vesicles to their fusion with membranes. Rabs cycle between active GTP-bound and inactive GDP-bound states. In their active state, drive transport of vesicular carriers from donor organelles to acceptor organelles to regulate the membrane traffic that maintains organelle identity and morphology. RAB2A regulates autophagy by promoting autophagosome-lysosome fusion via recruitment of the HOPS endosomal tethering complex; this process involves autophagosomal RAB2A and lysosomal RAB39A recruitment of HOPS subcomplexes VPS39-VPS11 and VPS41-VPS16-VPS18-VPS33A, respectively, which assemble into a functional complex to mediate membrane tethering and SNAREs-driven membrane fusion. Required for protein transport from the endoplasmic reticulum to the Golgi complex. Regulates the compacted morphology of the Golgi. Together with RAB2B, redundantly required for efficient autophagic flux. The chain is Ras-related protein Rab-2A (RAB2A) from Canis lupus familiaris (Dog).